Consider the following 224-residue polypeptide: Uracil-DNA glycosylase (224 aa).

The Proton acceptor role is filled by aspartate 62.

It belongs to the uracil-DNA glycosylase (UDG) superfamily. UNG family.

The protein resides in the cytoplasm. It carries out the reaction Hydrolyzes single-stranded DNA or mismatched double-stranded DNA and polynucleotides, releasing free uracil.. Its function is as follows. Excises uracil residues from the DNA which can arise as a result of misincorporation of dUMP residues by DNA polymerase or due to deamination of cytosine. This Aliivibrio fischeri (strain ATCC 700601 / ES114) (Vibrio fischeri) protein is Uracil-DNA glycosylase.